Reading from the N-terminus, the 607-residue chain is MAASVANCCFSVLNASVKIQSSSISSPWCFVSASSLTPRASSNIKRKSSRSDSPSPILNPEKNYPGRVRDESSNPPQKMAFKAFGSPKKEKKESLSDFSRDQQTDPAKIHDASFLNAVVKVYCTHTAPDYSLPWQKQRQFTSTGSAFMIGDGKLLTNAHCVEHDTQVKVKRRGDDRKYVAKVLVRGVDCDIALLSVESEDFWKGAEPLRLGHLPRLQDSVTVVGYPLGGDTISVTKGVVSRIEVTSYAHGSSDLLGIQIDAAINPGNSGGPAFNDQGECIGVAFQVYRSEETENIGYVIPTTVVSHFLTDYERNGKYTGYPCLGVLLQKLENPALRECLKVPTNEGVLVRRVEPTSDASKVLKEGDVIVSFDDLHVGCEGTVPFRSSERIAFRYLISQKFAGDIAEIGIIRAGEHKKVQVVLRPRVHLVPYHIDGGQPSYIIVAGLVFTPLSEPLIEEECEDTIGLKLLTKARYSVARFRGEQIVILSQVLANEVNIGYEDMNNQQVLKFNGIPIRNIHHLAHLIDMCKDKYLVFEFEDNYVAVLEREASNSASLCILKDYGIPSERSADLLEPYVDPIDDTQALDQGIGDSPVSNLEIGFDGLVWA.

Residues 41–104 (SSNIKRKSSR…LSDFSRDQQT (64 aa)) are disordered. Residues 87 to 104 (PKKEKKESLSDFSRDQQT) show a composition bias toward basic and acidic residues. A serine protease region spans residues 118–317 (VVKVYCTHTA…LTDYERNGKY (200 aa)). Residues histidine 159, aspartate 190, and serine 268 each act as charge relay system in the active site. The 96-residue stretch at 308–403 (LTDYERNGKY…YLISQKFAGD (96 aa)) folds into the PDZ domain.

Belongs to the peptidase S1C family.

It is found in the plastid. The protein resides in the chloroplast thylakoid membrane. Functionally, serine protease that performs the primary cleavage of the photodamaged D1 protein in plant photosystem II. The chain is Protease Do-like 2, chloroplastic (DEGP2) from Arabidopsis thaliana (Mouse-ear cress).